Consider the following 808-residue polypeptide: Probable E3 ubiquitin-protein ligase MARCHF10 (808 aa).

Disordered stretches follow at residues 33 to 81 (LRRQ…LTEP), 101 to 268 (QTSV…RKAS), and 284 to 415 (SRRE…EVGV). Basic and acidic residues predominate over residues 34 to 49 (RRQEYRRDPNEKKRDQ). Polar residues predominate over residues 237 to 249 (QAFQGKNSPQVLS). Basic and acidic residues-rich tracts occupy residues 330 to 349 (KNFE…RSEP) and 379 to 397 (LPDR…ENAK). The segment at 651-721 (DSEEEGDLCR…EMCKQGLLVD (71 aa)) adopts an RING-CH-type zinc-finger fold. The Zn(2+) site is built by cysteine 659, cysteine 662, cysteine 677, cysteine 679, histidine 687, cysteine 690, cysteine 711, and cysteine 714. The segment at 773 to 808 (ERERLSRNYPQPRTEENENSELGDGNEGSISQSQVV) is disordered.

The catalysed reaction is S-ubiquitinyl-[E2 ubiquitin-conjugating enzyme]-L-cysteine + [acceptor protein]-L-lysine = [E2 ubiquitin-conjugating enzyme]-L-cysteine + N(6)-ubiquitinyl-[acceptor protein]-L-lysine.. It functions in the pathway protein modification; protein ubiquitination. E3 ubiquitin-protein ligase. E3 ubiquitin ligases accept ubiquitin from an E2 ubiquitin-conjugating enzyme in the form of a thioester and then directly transfer the ubiquitin to targeted substrates. In Homo sapiens (Human), this protein is Probable E3 ubiquitin-protein ligase MARCHF10.